The primary structure comprises 874 residues: Alanine--tRNA ligase (874 aa).

Residues His562, His566, Cys664, and His668 each contribute to the Zn(2+) site.

Belongs to the class-II aminoacyl-tRNA synthetase family. The cofactor is Zn(2+).

Its subcellular location is the cytoplasm. It catalyses the reaction tRNA(Ala) + L-alanine + ATP = L-alanyl-tRNA(Ala) + AMP + diphosphate. Its function is as follows. Catalyzes the attachment of alanine to tRNA(Ala) in a two-step reaction: alanine is first activated by ATP to form Ala-AMP and then transferred to the acceptor end of tRNA(Ala). Also edits incorrectly charged Ser-tRNA(Ala) and Gly-tRNA(Ala) via its editing domain. The protein is Alanine--tRNA ligase of Shewanella woodyi (strain ATCC 51908 / MS32).